We begin with the raw amino-acid sequence, 301 residues long: Quinolinate synthase (301 aa).

H21 and S38 together coordinate iminosuccinate. C83 contacts [4Fe-4S] cluster. Residues Y109–N111 and S126 each bind iminosuccinate. Residue C169 participates in [4Fe-4S] cluster binding. Residues H195 to E197 and T212 contribute to the iminosuccinate site. C257 contributes to the [4Fe-4S] cluster binding site.

The protein belongs to the quinolinate synthase family. Type 2 subfamily. [4Fe-4S] cluster serves as cofactor.

Its subcellular location is the cytoplasm. The catalysed reaction is iminosuccinate + dihydroxyacetone phosphate = quinolinate + phosphate + 2 H2O + H(+). It participates in cofactor biosynthesis; NAD(+) biosynthesis; quinolinate from iminoaspartate: step 1/1. Its function is as follows. Catalyzes the condensation of iminoaspartate with dihydroxyacetone phosphate to form quinolinate. The chain is Quinolinate synthase from Clostridium perfringens (strain SM101 / Type A).